The following is a 412-amino-acid chain: Putative competence-damage inducible protein (412 aa).

Belongs to the CinA family.

The protein is Putative competence-damage inducible protein of Bacillus cereus (strain ATCC 10987 / NRS 248).